The following is a 29-amino-acid chain: M-poneritoxin-Ng3d (29 aa).

In terms of tissue distribution, expressed by the venom gland.

The protein localises to the secreted. Has activity against some Gram-positive bacteria and S.cerevisiae. Has a non-hemolytic activity. The sequence is that of M-poneritoxin-Ng3d from Neoponera goeldii (Ponerine ant).